A 253-amino-acid chain; its full sequence is Pimeloyl-[acyl-carrier protein] methyl ester esterase (253 aa).

Substrate contacts are provided by residues Trp-18, 78 to 79, and 139 to 143; these read SL and FLALD. Ser-78 acts as the Nucleophile in catalysis. Catalysis depends on residues Asp-203 and His-231. Residue His-231 participates in substrate binding.

Belongs to the AB hydrolase superfamily. Carboxylesterase BioH family. In terms of assembly, monomer.

It is found in the cytoplasm. It catalyses the reaction 6-carboxyhexanoyl-[ACP] methyl ester + H2O = 6-carboxyhexanoyl-[ACP] + methanol + H(+). It participates in cofactor biosynthesis; biotin biosynthesis. The physiological role of BioH is to remove the methyl group introduced by BioC when the pimeloyl moiety is complete. It allows to synthesize pimeloyl-ACP via the fatty acid synthetic pathway through the hydrolysis of the ester bonds of pimeloyl-ACP esters. The chain is Pimeloyl-[acyl-carrier protein] methyl ester esterase from Xanthomonas axonopodis pv. citri (strain 306).